We begin with the raw amino-acid sequence, 202 residues long: MNFLKKMIKSCKDEETQKYPSASAPPDDDDIWMPPPEYVPLTQVKGKASVRNFCISGEVKICSPNGYSFKILRHILKSFDNVYSGNRRMIGLVKVVIGLVLSGSPVPEGMNWVYKLRRTLIFQWAESHGPLEGEELEYSQEITWDDEAEFVGLQIRVSARQCHIQGRLWCINMNSRACQLWADMILQTQQSPDDENTSLLLE.

A PPXY motif motif is present at residues 35 to 38 (PPEY). The essential for glycoprotein binding stretch occupies residues 115–151 (KLRRTLIFQWAESHGPLEGEELEYSQEITWDDEAEFV).

It belongs to the lyssavirus matrix protein family. Homomultimer. Interacts with nucleoprotein and with the cytoplasmic domain of glycoprotein.

Its subcellular location is the virion membrane. It is found in the host endomembrane system. Its function is as follows. Plays a major role in assembly and budding of virion. Completely covers the ribonucleoprotein coil and keep it in condensed bullet-shaped form. Inhibits viral transcription and stimulates replication. Plays a major role in early induction of TRAIL-mediated apoptosis in infected neurons. The protein is Matrix protein (M) of Mokola virus (MOKV).